The sequence spans 589 residues: Transmembrane 9 superfamily member 3 (589 aa).

Positions 1–28 are cleaved as a signal peptide; sequence MRPLPGALGVAAAAALWLLLLLLPRTRA. Asn-174 carries an N-linked (GlcNAc...) asparagine glycan. The next 5 membrane-spanning stretches (helical) occupy residues 224 to 244, 294 to 314, 328 to 348, 360 to 380, and 389 to 409; these read FSIF…SMIL, LIGS…VAMI, AIFV…SLYA, FIGA…INFI, and AIPF…ILPL. Asn-419 is a glycosylation site (N-linked (GlcNAc...) asparagine). 4 consecutive transmembrane segments (helical) span residues 449-469, 482-502, 519-539, and 551-571; these read IVCL…YFIF, GFMM…TIVC, FLSA…YYFF, and FYFG…GAIG.

It belongs to the nonaspanin (TM9SF) (TC 9.A.2) family.

Its subcellular location is the membrane. The protein is Transmembrane 9 superfamily member 3 (TM9SF3) of Homo sapiens (Human).